The chain runs to 274 residues: 2,3,4,5-tetrahydropyridine-2,6-dicarboxylate N-succinyltransferase (274 aa).

Substrate contacts are provided by arginine 105 and aspartate 142.

This sequence belongs to the transferase hexapeptide repeat family. Homotrimer.

The protein resides in the cytoplasm. The enzyme catalyses (S)-2,3,4,5-tetrahydrodipicolinate + succinyl-CoA + H2O = (S)-2-succinylamino-6-oxoheptanedioate + CoA. It functions in the pathway amino-acid biosynthesis; L-lysine biosynthesis via DAP pathway; LL-2,6-diaminopimelate from (S)-tetrahydrodipicolinate (succinylase route): step 1/3. In Thiobacillus denitrificans (strain ATCC 25259 / T1), this protein is 2,3,4,5-tetrahydropyridine-2,6-dicarboxylate N-succinyltransferase.